The chain runs to 259 residues: Type III pantothenate kinase (259 aa).

6 to 13 (DIGNTNIT) lines the ATP pocket. 113–116 (GADR) serves as a coordination point for substrate. Residue Asp-115 is the Proton acceptor of the active site. Residue Asp-135 participates in K(+) binding. Thr-138 lines the ATP pocket. Thr-190 contacts substrate.

This sequence belongs to the type III pantothenate kinase family. As to quaternary structure, homodimer. The cofactor is NH4(+). K(+) is required as a cofactor.

The protein localises to the cytoplasm. It carries out the reaction (R)-pantothenate + ATP = (R)-4'-phosphopantothenate + ADP + H(+). Its pathway is cofactor biosynthesis; coenzyme A biosynthesis; CoA from (R)-pantothenate: step 1/5. Functionally, catalyzes the phosphorylation of pantothenate (Pan), the first step in CoA biosynthesis. The protein is Type III pantothenate kinase of Endomicrobium trichonymphae.